The following is an 886-amino-acid chain: Alanine--tRNA ligase (886 aa).

Positions 568, 572, 670, and 674 each coordinate Zn(2+).

The protein belongs to the class-II aminoacyl-tRNA synthetase family. Zn(2+) is required as a cofactor.

It localises to the cytoplasm. The enzyme catalyses tRNA(Ala) + L-alanine + ATP = L-alanyl-tRNA(Ala) + AMP + diphosphate. Its function is as follows. Catalyzes the attachment of alanine to tRNA(Ala) in a two-step reaction: alanine is first activated by ATP to form Ala-AMP and then transferred to the acceptor end of tRNA(Ala). Also edits incorrectly charged Ser-tRNA(Ala) and Gly-tRNA(Ala) via its editing domain. The polypeptide is Alanine--tRNA ligase (Prochlorococcus marinus (strain NATL1A)).